The chain runs to 1500 residues: DNA-directed RNA polymerase subunit beta' (1500 aa).

Zn(2+) contacts are provided by Cys-60, Cys-62, Cys-75, and Cys-78. The interval 180–199 (DLGGMETAQRSTQRQIEEDY) is disordered. Residues Asp-626, Asp-628, and Asp-630 each coordinate Mg(2+). The Zn(2+) site is built by Cys-1002, Cys-1075, Cys-1082, and Cys-1085. Residues 1440–1500 (EVQQAEKSAE…DSDHPDLSSL (61 aa)) form a disordered region. Over residues 1449–1468 (EPTTTALPTTNGHQAPQSDT) the composition is skewed to polar residues.

This sequence belongs to the RNA polymerase beta' chain family. The RNAP catalytic core consists of 2 alpha, 1 beta, 1 beta' and 1 omega subunit. When a sigma factor is associated with the core the holoenzyme is formed, which can initiate transcription. Requires Mg(2+) as cofactor. Zn(2+) is required as a cofactor.

The catalysed reaction is RNA(n) + a ribonucleoside 5'-triphosphate = RNA(n+1) + diphosphate. In terms of biological role, DNA-dependent RNA polymerase catalyzes the transcription of DNA into RNA using the four ribonucleoside triphosphates as substrates. In Chloroflexus aggregans (strain MD-66 / DSM 9485), this protein is DNA-directed RNA polymerase subunit beta'.